Consider the following 344-residue polypeptide: Plastoglobule-localized metallopeptidase 48, chloroplastic (344 aa).

A chloroplast-targeting transit peptide spans 1 to 47 (MAVSVSAPVLSLCYNQSGELSRSLGYRLPKKVGFSSGRRSVSYIGFG). Helical transmembrane passes span 102–122 (LLGSMTEQIMLLENIGTSVLV) and 169–189 (FIVVHTSLIELLTSAELQAVL). His191 is a Zn(2+) binding site. Glu192 is a catalytic residue. His195 lines the Zn(2+) pocket. A helical transmembrane segment spans residues 201–221 (GVWLTFANILTLGAYTVPAFG). Residue Glu240 coordinates Zn(2+). A helical transmembrane segment spans residues 256–272 (VVVSVLMKLAGGCPSIA).

This sequence belongs to the peptidase M48 family. M48D subfamily. In terms of assembly, interacts with plastoglobule (PG) core proteins ABC1K3, PES1 and CCD4. The cofactor is Zn(2+). In terms of tissue distribution, mostly expressed in flowers (e.g. sepals, petals and stamen), seeds, leaves and cotyledons.

It localises to the plastid. It is found in the chloroplast. Its subcellular location is the plastoglobule. The protein localises to the chloroplast membrane. In terms of biological role, metalloendopeptidase with a Zn-dependent proteolytic activity and substrate cleavage upstream of hydrophobic residues. Positive regulator of senescence, probably by degrading CCD4, thus participating in the controlled removal of carotenoids from the thylakoid membrane during the senescence process. In Arabidopsis thaliana (Mouse-ear cress), this protein is Plastoglobule-localized metallopeptidase 48, chloroplastic.